Consider the following 232-residue polypeptide: Large ribosomal subunit protein uL1 (232 aa).

It belongs to the universal ribosomal protein uL1 family. Part of the 50S ribosomal subunit.

Functionally, binds directly to 23S rRNA. The L1 stalk is quite mobile in the ribosome, and is involved in E site tRNA release. Protein L1 is also a translational repressor protein, it controls the translation of the L11 operon by binding to its mRNA. This chain is Large ribosomal subunit protein uL1, found in Paraburkholderia phytofirmans (strain DSM 17436 / LMG 22146 / PsJN) (Burkholderia phytofirmans).